We begin with the raw amino-acid sequence, 278 residues long: MFTSPGPVLFQFGPLTLRWYGLLIAMAVLIGLNLSSRLAQSRKLENGLISDLLPLLVLFSVIGARLYYVAFEWHNYANQPIKALAIWEGGIAIHGALIAGTLTLILFCRWRSQPFLDVLDVLAPSVALGQAIGRWGNFFNSEAFGVPTDLAWKLFIPYANRPVIYADAEFFHPTFLYESIWNLLLFVLLLVLFRWGSRERQNFPAGTLSCVYLIGYSLGRIWIEGLRIDPLCVGALPPACEGGVRIAQLMSAMLMVLGGLGLWWLKRRQQQLPVSTNR.

4 consecutive transmembrane segments (helical) span residues 12–32, 44–64, 86–106, and 113–133; these read FGPL…LIGL, LENG…VIGA, IWEG…TLIL, and QPFL…QAIG. Arg-134 is a binding site for a 1,2-diacyl-sn-glycero-3-phospho-(1'-sn-glycerol). 3 helical membrane-spanning segments follow: residues 173 to 193, 203 to 223, and 246 to 266; these read PTFL…LVLF, FPAG…RIWI, and IAQL…WWLK.

The protein belongs to the Lgt family.

The protein resides in the cell inner membrane. It carries out the reaction L-cysteinyl-[prolipoprotein] + a 1,2-diacyl-sn-glycero-3-phospho-(1'-sn-glycerol) = an S-1,2-diacyl-sn-glyceryl-L-cysteinyl-[prolipoprotein] + sn-glycerol 1-phosphate + H(+). It participates in protein modification; lipoprotein biosynthesis (diacylglyceryl transfer). In terms of biological role, catalyzes the transfer of the diacylglyceryl group from phosphatidylglycerol to the sulfhydryl group of the N-terminal cysteine of a prolipoprotein, the first step in the formation of mature lipoproteins. The sequence is that of Phosphatidylglycerol--prolipoprotein diacylglyceryl transferase from Parasynechococcus marenigrum (strain WH8102).